Reading from the N-terminus, the 62-residue chain is Large ribosomal subunit protein bL28 (62 aa).

This sequence belongs to the bacterial ribosomal protein bL28 family.

The protein is Large ribosomal subunit protein bL28 of Ruminiclostridium cellulolyticum (strain ATCC 35319 / DSM 5812 / JCM 6584 / H10) (Clostridium cellulolyticum).